The primary structure comprises 211 residues: NADH-quinone oxidoreductase subunit I (211 aa).

4Fe-4S ferredoxin-type domains lie at 90–119 (RLWESDTERCIGCGLCEKICISNCIRIDTK) and 129–158 (TEYSINLGRCIFCGYCAEVCPELAITHGGE). Residues Cys99, Cys102, Cys105, Cys109, Cys138, Cys141, Cys144, and Cys148 each contribute to the [4Fe-4S] cluster site.

The protein belongs to the complex I 23 kDa subunit family. NDH-1 is composed of 14 different subunits. Subunits NuoA, H, J, K, L, M, N constitute the membrane sector of the complex. It depends on [4Fe-4S] cluster as a cofactor.

The protein resides in the cell inner membrane. It catalyses the reaction a quinone + NADH + 5 H(+)(in) = a quinol + NAD(+) + 4 H(+)(out). Functionally, NDH-1 shuttles electrons from NADH, via FMN and iron-sulfur (Fe-S) centers, to quinones in the respiratory chain. The immediate electron acceptor for the enzyme in this species is believed to be ubiquinone. Couples the redox reaction to proton translocation (for every two electrons transferred, four hydrogen ions are translocated across the cytoplasmic membrane), and thus conserves the redox energy in a proton gradient. This is NADH-quinone oxidoreductase subunit I from Sulfurimonas denitrificans (strain ATCC 33889 / DSM 1251) (Thiomicrospira denitrificans (strain ATCC 33889 / DSM 1251)).